The chain runs to 135 residues: Holo-[acyl-carrier-protein] synthase (135 aa).

Mg(2+) is bound by residues aspartate 7 and glutamate 57.

The protein belongs to the P-Pant transferase superfamily. AcpS family. It depends on Mg(2+) as a cofactor.

Its subcellular location is the cytoplasm. The catalysed reaction is apo-[ACP] + CoA = holo-[ACP] + adenosine 3',5'-bisphosphate + H(+). Functionally, transfers the 4'-phosphopantetheine moiety from coenzyme A to a Ser of acyl-carrier-protein. The protein is Holo-[acyl-carrier-protein] synthase of Corynebacterium glutamicum (strain R).